Consider the following 800-residue polypeptide: Phenylalanine--tRNA ligase beta subunit (800 aa).

The 116-residue stretch at 39 to 154 (TKDIKNLVVG…ESQVPGTDAL (116 aa)) folds into the tRNA-binding domain. One can recognise a B5 domain in the interval 408-483 (AFITPIDITA…RIYGYDDIPS (76 aa)). The Mg(2+) site is built by Asp461, Asp467, Glu470, and Glu471. The region spanning 708–800 (PIFPGMSRDI…ALIEQGAVIR (93 aa)) is the FDX-ACB domain.

Belongs to the phenylalanyl-tRNA synthetase beta subunit family. Type 1 subfamily. In terms of assembly, tetramer of two alpha and two beta subunits. Requires Mg(2+) as cofactor.

It localises to the cytoplasm. It catalyses the reaction tRNA(Phe) + L-phenylalanine + ATP = L-phenylalanyl-tRNA(Phe) + AMP + diphosphate + H(+). The polypeptide is Phenylalanine--tRNA ligase beta subunit (Staphylococcus aureus (strain bovine RF122 / ET3-1)).